The primary structure comprises 198 residues: Glycerol-3-phosphate acyltransferase (198 aa).

Helical transmembrane passes span 6 to 26, 56 to 78, 83 to 101, 113 to 133, and 155 to 175; these read FLPV…GLVL, LAAG…AGYI, AAMA…PVWL, IGIL…LWLA, and FLWW…TLLL.

The protein belongs to the PlsY family. In terms of assembly, probably interacts with PlsX.

It localises to the cell inner membrane. It carries out the reaction an acyl phosphate + sn-glycerol 3-phosphate = a 1-acyl-sn-glycero-3-phosphate + phosphate. The protein operates within lipid metabolism; phospholipid metabolism. Catalyzes the transfer of an acyl group from acyl-phosphate (acyl-PO(4)) to glycerol-3-phosphate (G3P) to form lysophosphatidic acid (LPA). This enzyme utilizes acyl-phosphate as fatty acyl donor, but not acyl-CoA or acyl-ACP. In Bradyrhizobium diazoefficiens (strain JCM 10833 / BCRC 13528 / IAM 13628 / NBRC 14792 / USDA 110), this protein is Glycerol-3-phosphate acyltransferase.